We begin with the raw amino-acid sequence, 819 residues long: Leucine--tRNA ligase (819 aa).

Residues 42-53 (PYPSGAKLHIGH) carry the 'HIGH' region motif. The short motif at 578-582 (RMSKS) is the 'KMSKS' region element. Residue Lys-581 participates in ATP binding.

It belongs to the class-I aminoacyl-tRNA synthetase family.

The protein localises to the cytoplasm. The enzyme catalyses tRNA(Leu) + L-leucine + ATP = L-leucyl-tRNA(Leu) + AMP + diphosphate. The protein is Leucine--tRNA ligase of Caldanaerobacter subterraneus subsp. tengcongensis (strain DSM 15242 / JCM 11007 / NBRC 100824 / MB4) (Thermoanaerobacter tengcongensis).